The following is a 537-amino-acid chain: Phosphoenolpyruvate carboxykinase (ATP) (537 aa).

Residues arginine 64, tyrosine 204, and lysine 210 each contribute to the substrate site. Residues lysine 210, histidine 229, and 245–253 (GLSGTGKTT) contribute to the ATP site. Positions 210 and 229 each coordinate Mn(2+). Aspartate 266 lines the Mn(2+) pocket. ATP-binding positions include glutamate 294, arginine 330, 446–447 (RI), and threonine 452. Substrate is bound at residue arginine 330.

This sequence belongs to the phosphoenolpyruvate carboxykinase (ATP) family. Monomer. It depends on Mn(2+) as a cofactor.

The protein resides in the cytoplasm. The enzyme catalyses oxaloacetate + ATP = phosphoenolpyruvate + ADP + CO2. It participates in carbohydrate biosynthesis; gluconeogenesis. Its function is as follows. Involved in the gluconeogenesis. Catalyzes the conversion of oxaloacetate (OAA) to phosphoenolpyruvate (PEP) through direct phosphoryl transfer between the nucleoside triphosphate and OAA. This chain is Phosphoenolpyruvate carboxykinase (ATP), found in Aliivibrio fischeri (strain ATCC 700601 / ES114) (Vibrio fischeri).